We begin with the raw amino-acid sequence, 476 residues long: Aspartyl/glutamyl-tRNA(Asn/Gln) amidotransferase subunit B (476 aa).

Belongs to the GatB/GatE family. GatB subfamily. Heterotrimer of A, B and C subunits.

The enzyme catalyses L-glutamyl-tRNA(Gln) + L-glutamine + ATP + H2O = L-glutaminyl-tRNA(Gln) + L-glutamate + ADP + phosphate + H(+). It carries out the reaction L-aspartyl-tRNA(Asn) + L-glutamine + ATP + H2O = L-asparaginyl-tRNA(Asn) + L-glutamate + ADP + phosphate + 2 H(+). Its function is as follows. Allows the formation of correctly charged Asn-tRNA(Asn) or Gln-tRNA(Gln) through the transamidation of misacylated Asp-tRNA(Asn) or Glu-tRNA(Gln) in organisms which lack either or both of asparaginyl-tRNA or glutaminyl-tRNA synthetases. The reaction takes place in the presence of glutamine and ATP through an activated phospho-Asp-tRNA(Asn) or phospho-Glu-tRNA(Gln). This is Aspartyl/glutamyl-tRNA(Asn/Gln) amidotransferase subunit B from Enterococcus faecalis (strain ATCC 700802 / V583).